The sequence spans 277 residues: Outer plastidial membrane protein porin (277 aa).

Belongs to the eukaryotic mitochondrial porin (TC 1.B.8.1) family.

The protein resides in the plastid outer membrane. In terms of biological role, forms a channel through the cell membrane that allows diffusion of small hydrophilic molecules. The channel adopts an open conformation at low or zero membrane potential and a closed conformation at potentials above 30-40 mV. The open state has a weak anion selectivity whereas the closed state is cation-selective. The chain is Outer plastidial membrane protein porin (POR1) from Zea mays (Maize).